Consider the following 267-residue polypeptide: 3-methyl-2-oxobutanoate hydroxymethyltransferase (267 aa).

Mg(2+)-binding residues include Asp45 and Asp84. Residues 45 to 46 (DS), Asp84, and Lys113 contribute to the 3-methyl-2-oxobutanoate site. Residue Glu115 participates in Mg(2+) binding. The Proton acceptor role is filled by Glu182.

It belongs to the PanB family. In terms of assembly, homodecamer; pentamer of dimers. Requires Mg(2+) as cofactor.

The protein resides in the cytoplasm. It catalyses the reaction 3-methyl-2-oxobutanoate + (6R)-5,10-methylene-5,6,7,8-tetrahydrofolate + H2O = 2-dehydropantoate + (6S)-5,6,7,8-tetrahydrofolate. It functions in the pathway cofactor biosynthesis; coenzyme A biosynthesis. Functionally, catalyzes the reversible reaction in which hydroxymethyl group from 5,10-methylenetetrahydrofolate is transferred onto alpha-ketoisovalerate to form ketopantoate. This chain is 3-methyl-2-oxobutanoate hydroxymethyltransferase, found in Sulfurisphaera tokodaii (strain DSM 16993 / JCM 10545 / NBRC 100140 / 7) (Sulfolobus tokodaii).